Here is an 86-residue protein sequence, read N- to C-terminus: Cytochrome c oxidase subunit 12, mitochondrial (86 aa).

A CHCH domain is found at 30–73; the sequence is TKHCFQSYIDYFRCIKAKGEDFVPCKQFWHAYQSLCPMEWVERW. A Cx9C motif motif is present at residues 33–43; it reads CFQSYIDYFRC. Cystine bridges form between cysteine 33-cysteine 65 and cysteine 43-cysteine 54. The short motif at 54–65 is the Cx10C motif element; sequence CKQFWHAYQSLC.

This sequence belongs to the cytochrome c oxidase subunit 6B family. Component of the cytochrome c oxidase (complex IV, CIV), a multisubunit enzyme composed of a catalytic core of 3 subunits and several supernumerary subunits. The complex exists as a monomer or a dimer and forms supercomplexes (SCs) in the inner mitochondrial membrane with ubiquinol-cytochrome c oxidoreductase (cytochrome b-c1 complex, complex III, CIII).

The protein localises to the mitochondrion inner membrane. It participates in energy metabolism; oxidative phosphorylation. Its function is as follows. Component of the cytochrome c oxidase, the last enzyme in the mitochondrial electron transport chain which drives oxidative phosphorylation. The respiratory chain contains 3 multisubunit complexes succinate dehydrogenase (complex II, CII), ubiquinol-cytochrome c oxidoreductase (cytochrome b-c1 complex, complex III, CIII) and cytochrome c oxidase (complex IV, CIV), that cooperate to transfer electrons derived from NADH and succinate to molecular oxygen, creating an electrochemical gradient over the inner membrane that drives transmembrane transport and the ATP synthase. Cytochrome c oxidase is the component of the respiratory chain that catalyzes the reduction of oxygen to water. Electrons originating from reduced cytochrome c in the intermembrane space (IMS) are transferred via the dinuclear copper A center (CU(A)) of subunit 2 and heme A of subunit 1 to the active site in subunit 1, a binuclear center (BNC) formed by heme A3 and copper B (CU(B)). The BNC reduces molecular oxygen to 2 water molecules using 4 electrons from cytochrome c in the IMS and 4 protons from the mitochondrial matrix. The polypeptide is Cytochrome c oxidase subunit 12, mitochondrial (cox12) (Schizosaccharomyces pombe (strain 972 / ATCC 24843) (Fission yeast)).